The following is a 207-amino-acid chain: FMN-dependent NADH:quinone oxidoreductase 2 (207 aa).

Residues S10, 16–18, 96–99, and 141–144 each bind FMN; these read SIS, MYNL, and SRGG.

This sequence belongs to the azoreductase type 1 family. Homodimer. It depends on FMN as a cofactor.

The catalysed reaction is 2 a quinone + NADH + H(+) = 2 a 1,4-benzosemiquinone + NAD(+). It catalyses the reaction N,N-dimethyl-1,4-phenylenediamine + anthranilate + 2 NAD(+) = 2-(4-dimethylaminophenyl)diazenylbenzoate + 2 NADH + 2 H(+). Functionally, quinone reductase that provides resistance to thiol-specific stress caused by electrophilic quinones. In terms of biological role, also exhibits azoreductase activity. Catalyzes the reductive cleavage of the azo bond in aromatic azo compounds to the corresponding amines. This is FMN-dependent NADH:quinone oxidoreductase 2 from Trichormus variabilis (strain ATCC 29413 / PCC 7937) (Anabaena variabilis).